A 363-amino-acid chain; its full sequence is Small ribosomal subunit biogenesis GTPase RsgA (363 aa).

A CP-type G domain is found at 112 to 268 (HQQVIAANID…LIDTPGMREL (157 aa)). Residues 157–160 (TKAD) and 210–218 (GSSGAGKST) each bind GTP. 4 residues coordinate Zn(2+): C291, C296, H298, and C304. The tract at residues 340 to 363 (RVAQNNRGKGSGKRPASVDRPGRR) is disordered.

This sequence belongs to the TRAFAC class YlqF/YawG GTPase family. RsgA subfamily. In terms of assembly, monomer. Associates with 30S ribosomal subunit, binds 16S rRNA. Zn(2+) is required as a cofactor.

Its subcellular location is the cytoplasm. Its function is as follows. One of several proteins that assist in the late maturation steps of the functional core of the 30S ribosomal subunit. Helps release RbfA from mature subunits. May play a role in the assembly of ribosomal proteins into the subunit. Circularly permuted GTPase that catalyzes slow GTP hydrolysis, GTPase activity is stimulated by the 30S ribosomal subunit. The protein is Small ribosomal subunit biogenesis GTPase RsgA of Xanthomonas euvesicatoria pv. vesicatoria (strain 85-10) (Xanthomonas campestris pv. vesicatoria).